Consider the following 281-residue polypeptide: uncharacterized protein (281 aa).

It localises to the plastid. The protein localises to the chloroplast. This is an uncharacterized protein from Euglena gracilis.